The following is a 509-amino-acid chain: Tyrosine-protein kinase STK (509 aa).

Residues Met1–Pro16 are compositionally biased toward polar residues. The disordered stretch occupies residues Met1–Asp23. Gly2 is lipidated: N-myristoyl glycine. Residues Pro59 to Ser120 enclose the SH3 domain. The SH2 domain maps to Trp126 to Cys218. Positions Leu240–Val495 constitute a Protein kinase domain. Residues Leu246–Val254 and Lys268 contribute to the ATP site. Residue Asp360 is the Proton acceptor of the active site. Position 390 is a phosphotyrosine; by autocatalysis (Tyr390).

The protein belongs to the protein kinase superfamily. Tyr protein kinase family. SRC subfamily.

It carries out the reaction L-tyrosyl-[protein] + ATP = O-phospho-L-tyrosyl-[protein] + ADP + H(+). The protein is Tyrosine-protein kinase STK (STK) of Hydra vulgaris (Hydra).